Consider the following 405-residue polypeptide: MQYSEIMVRYGELSTKGKNRQAFIGRLNGNVTRALHEFPRLTIRPKRDRMHIELNGEPSDQVMARLSQVFGIQNFSPSIAVEKDMDKVHAVALQLMNETAPKGISYKVNTRRSDHDFALDTNAMNLDLGDYLTDKRPDLVVKMHQPDMILRVEVRREAIYLSTKTIQGAGGLPVGTAGKAALMLSGGIDSPVAGYYALKRGVDIEMVHFFSPPYTSQQALNKAKQLTAKLTPYVGRIYFIEVPFTEIQEEIKAKVPEGYLMTVQRRLMLRLTEAIAQQRGDLAIFNGESVGQVASQTLESMAAINDVTTMPIIRPVATMDKNEIIAEAEKIDTYDLSIMPFEDCCTIFAPPSPKTRPKTDRARYYESKIDVAGLMDRALAGVKIQEIKSSDQFMNQDQDVIAELL.

Residues 60 to 165 (DQVMARLSQV…REAIYLSTKT (106 aa)) enclose the THUMP domain. ATP contacts are provided by residues 183 to 184 (ML), 208 to 209 (HF), Arg265, Gly287, and Gln296.

It belongs to the ThiI family.

The protein localises to the cytoplasm. The catalysed reaction is [ThiI sulfur-carrier protein]-S-sulfanyl-L-cysteine + a uridine in tRNA + 2 reduced [2Fe-2S]-[ferredoxin] + ATP + H(+) = [ThiI sulfur-carrier protein]-L-cysteine + a 4-thiouridine in tRNA + 2 oxidized [2Fe-2S]-[ferredoxin] + AMP + diphosphate. It carries out the reaction [ThiS sulfur-carrier protein]-C-terminal Gly-Gly-AMP + S-sulfanyl-L-cysteinyl-[cysteine desulfurase] + AH2 = [ThiS sulfur-carrier protein]-C-terminal-Gly-aminoethanethioate + L-cysteinyl-[cysteine desulfurase] + A + AMP + 2 H(+). Its pathway is cofactor biosynthesis; thiamine diphosphate biosynthesis. Catalyzes the ATP-dependent transfer of a sulfur to tRNA to produce 4-thiouridine in position 8 of tRNAs, which functions as a near-UV photosensor. Also catalyzes the transfer of sulfur to the sulfur carrier protein ThiS, forming ThiS-thiocarboxylate. This is a step in the synthesis of thiazole, in the thiamine biosynthesis pathway. The sulfur is donated as persulfide by IscS. The chain is Probable tRNA sulfurtransferase from Lacticaseibacillus casei (strain BL23) (Lactobacillus casei).